The chain runs to 295 residues: Nucleotide-binding protein BPUM_3115 (295 aa).

16-23 (GMSGAGKT) contributes to the ATP binding site. 67–70 (DLRG) lines the GTP pocket.

This sequence belongs to the RapZ-like family.

Its function is as follows. Displays ATPase and GTPase activities. The chain is Nucleotide-binding protein BPUM_3115 from Bacillus pumilus (strain SAFR-032).